The sequence spans 229 residues: Molybdenum transport system permease protein ModB (229 aa).

Residues 6-214 (INLSLSVAVS…LISLLLSEWL (209 aa)) enclose the ABC transmembrane type-1 domain. Helical transmembrane passes span 12–32 (VAVSSMLWSLPLAIFVAWLLA), 45–65 (VIHLPLVLPPVVIGYLLLVAM), 83–103 (FGFSWKGAVLSSAVVAFPLVV), 132–152 (FFTITLPLSLPGVLAGLVLGF), and 196–216 (LCLFAIILSLISLLLSEWLSK).

Belongs to the binding-protein-dependent transport system permease family. CysTW subfamily.

The protein localises to the cell inner membrane. In terms of biological role, part of the binding-protein-dependent transport system for molybdenum; probably responsible for the translocation of the substrate across the membrane. The sequence is that of Molybdenum transport system permease protein ModB (modB) from Haemophilus influenzae (strain ATCC 51907 / DSM 11121 / KW20 / Rd).